Here is a 372-residue protein sequence, read N- to C-terminus: Hydrogenase-2 small chain (372 aa).

The segment at residues 1-37 (MTGDNTLIHSHGINRRDFMKLCAALAATMGLSSKAAA) is a signal peptide (tat-type signal). 8 residues coordinate [4Fe-4S] cluster: C59, C62, C157, C191, H229, C232, C257, and C263. Positions 272, 292, and 295 each coordinate [3Fe-4S] cluster.

It belongs to the [NiFe]/[NiFeSe] hydrogenase small subunit family. In terms of assembly, heterodimer of a large and a small subunit. It depends on [4Fe-4S] cluster as a cofactor. [3Fe-4S] cluster serves as cofactor. Post-translationally, predicted to be exported by the Tat system. The position of the signal peptide cleavage has not been experimentally proven.

It localises to the cell membrane. The protein localises to the periplasm. It carries out the reaction H2 + A = AH2. Its function is as follows. This is one of three E.coli hydrogenases synthesized in response to different physiological conditions. HYD2 is involved in hydrogen uptake. This chain is Hydrogenase-2 small chain (hybO), found in Escherichia coli O157:H7.